Consider the following 210-residue polypeptide: Large ribosomal subunit protein uL3 (210 aa).

It belongs to the universal ribosomal protein uL3 family. As to quaternary structure, part of the 50S ribosomal subunit. Forms a cluster with proteins L14 and L19.

Its function is as follows. One of the primary rRNA binding proteins, it binds directly near the 3'-end of the 23S rRNA, where it nucleates assembly of the 50S subunit. This is Large ribosomal subunit protein uL3 from Amoebophilus asiaticus (strain 5a2).